The sequence spans 66 residues: MPKLKTKSGAKKRFKVTGTGKVVSAHAGKRHGMIKRTKKQIRQLRGTRTLFKTDGDNIKQYFLPNA.

The protein belongs to the bacterial ribosomal protein bL35 family.

This is Large ribosomal subunit protein bL35 from Afipia carboxidovorans (strain ATCC 49405 / DSM 1227 / KCTC 32145 / OM5) (Oligotropha carboxidovorans).